The chain runs to 632 residues: Maltase 1 (632 aa).

A compositionally biased stretch (basic and acidic residues) spans methionine 1–aspartate 29. A disordered region spans residues methionine 1–serine 30. Residues asparagine 179 and asparagine 212 are each glycosylated (N-linked (GlcNAc...) asparagine). Aspartate 280 (nucleophile) is an active-site residue. Asparagine 333 carries an N-linked (GlcNAc...) asparagine glycan. The active-site Proton donor is glutamate 348. Residues asparagine 461, asparagine 575, and asparagine 578 are each glycosylated (N-linked (GlcNAc...) asparagine).

The protein belongs to the glycosyl hydrolase 13 family.

It catalyses the reaction Hydrolysis of terminal, non-reducing (1-&gt;4)-linked alpha-D-glucose residues with release of alpha-D-glucose.. In Drosophila virilis (Fruit fly), this protein is Maltase 1 (Mal-B1).